Consider the following 312-residue polypeptide: DNA-directed RNA polymerase subunit alpha (312 aa).

The interval 1–229 is alpha N-terminal domain (alpha-NTD); the sequence is MLQYQIDRID…ELFQPLATVS (229 aa). An alpha C-terminal domain (alpha-CTD) region spans residues 239 to 312; sequence EPAAEAQIPL…ISIPQSRTSA (74 aa).

This sequence belongs to the RNA polymerase alpha chain family. In cyanobacteria the RNAP catalytic core is composed of 2 alpha, 1 beta, 1 beta', 1 gamma and 1 omega subunit. When a sigma factor is associated with the core the holoenzyme is formed, which can initiate transcription.

The catalysed reaction is RNA(n) + a ribonucleoside 5'-triphosphate = RNA(n+1) + diphosphate. In terms of biological role, DNA-dependent RNA polymerase catalyzes the transcription of DNA into RNA using the four ribonucleoside triphosphates as substrates. This chain is DNA-directed RNA polymerase subunit alpha, found in Prochlorococcus marinus (strain NATL1A).